The following is a 75-amino-acid chain: Conotoxin Vc6a (75 aa).

The first 22 residues, 1 to 22 (MKLTCVVIVAVLFLTANTFATA), serve as a signal peptide directing secretion. The propeptide occupies 23 to 49 (DDPRNGLENLFLKAHHEMNPEASKLNE). Intrachain disulfides connect Cys51/Cys66, Cys58/Cys69, and Cys65/Cys74.

In terms of tissue distribution, expressed by the venom duct.

The protein localises to the secreted. The protein is Conotoxin Vc6a of Conus victoriae (Queen Victoria cone).